The following is a 465-amino-acid chain: MSFLVAIVGRANVGKSTLFNVLTNSRDALVFDFEGVTRDRQYGQAKYDDLDYLVVDTGGISDKDVGFDEFMAKQSQIAIDEANLVFFVVDGRSGLTTGDEYVASLLRQKDKKVVVVVNKVDGTDEEAAMAEFYSFGFDKVFAISAAHRRNTQKLVDKFLKKPLNEYYQDYTQTQEHKEQQRHGIHFSLIGRPNVGKSTLTNRMLGEDRVVVFDMPGTTIDSVSIPFERHGQKYTIVDTAGVRKRGKVKQTLEKFSVIKTLQAIQDSNVVVAVVDARQGISDQDLSLIHFAIKNGRALVLAVNKWDGMTEEDRIQVKQDLKRKLFFLQDYVDIHFISALHGTNVGHVFESIDTAYACANKKITTADATRLMQLAVEAHSPPMVGKFRIKLKYAHVGGHNPPVIVIHGNQVSRLPNSYKRYLENFFREALDFRGTPIVFEFKQSENPFADRKNKRSKDEGSKSKKVK.

2 consecutive EngA-type G domains span residues 3-166 (FLVA…LNEY) and 184-358 (IHFS…ACAN). Residues 9–16 (GRANVGKS), 56–60 (DTGGI), 118–121 (NKVD), 190–197 (GRPNVGKS), 237–241 (DTAGV), and 302–305 (NKWD) contribute to the GTP site. Residues 359-443 (KKITTADATR…PIVFEFKQSE (85 aa)) enclose the KH-like domain. The tract at residues 446–465 (FADRKNKRSKDEGSKSKKVK) is disordered.

This sequence belongs to the TRAFAC class TrmE-Era-EngA-EngB-Septin-like GTPase superfamily. EngA (Der) GTPase family. Associates with the 50S ribosomal subunit.

In terms of biological role, GTPase that plays an essential role in the late steps of ribosome biogenesis. The chain is GTPase Der from Francisella tularensis subsp. novicida (strain U112).